Here is a 163-residue protein sequence, read N- to C-terminus: Cuticle protein 38 (163 aa).

14 tandem repeats follow at residues 7–10 (AAPV), 13–16 (AAPA), 20–23 (AAPA), 26–29 (AAPV), 56–59 (AAPA), 62–65 (AAPA), 68–71 (AAPA), 75–78 (AAPA), 81–84 (AAPA), 93–96 (AAPV), 123–126 (AAPA), 135–138 (AAPA), 141–144 (AAPA), and 156–159 (AAPV).

Component of the cuticle of migratory locust which contains more than 100 different structural proteins. This is Cuticle protein 38 from Locusta migratoria (Migratory locust).